Here is a 93-residue protein sequence, read N- to C-terminus: Putative pterin-4-alpha-carbinolamine dehydratase (93 aa).

Belongs to the pterin-4-alpha-carbinolamine dehydratase family.

The catalysed reaction is (4aS,6R)-4a-hydroxy-L-erythro-5,6,7,8-tetrahydrobiopterin = (6R)-L-erythro-6,7-dihydrobiopterin + H2O. This is Putative pterin-4-alpha-carbinolamine dehydratase from Chloroflexus aurantiacus (strain ATCC 29366 / DSM 635 / J-10-fl).